We begin with the raw amino-acid sequence, 309 residues long: Probable manganese-dependent inorganic pyrophosphatase (309 aa).

Residues His9, Asp13, Asp15, Asp75, His97, and Asp149 each contribute to the Mn(2+) site.

It belongs to the PPase class C family. The cofactor is Mn(2+).

The protein localises to the cytoplasm. It carries out the reaction diphosphate + H2O = 2 phosphate + H(+). This is Probable manganese-dependent inorganic pyrophosphatase from Bacillus anthracis (strain CDC 684 / NRRL 3495).